A 396-amino-acid polypeptide reads, in one-letter code: 1-deoxy-D-xylulose 5-phosphate reductoisomerase (396 aa).

Positions 13, 14, 15, 16, and 127 each coordinate NADPH. A 1-deoxy-D-xylulose 5-phosphate-binding site is contributed by Lys128. Glu129 lines the NADPH pocket. A Mn(2+)-binding site is contributed by Asp153. Residues Ser154, Glu155, Ser184, and His207 each contribute to the 1-deoxy-D-xylulose 5-phosphate site. Glu155 contacts Mn(2+). Gly213 contacts NADPH. 1-deoxy-D-xylulose 5-phosphate contacts are provided by Ser220, Asn225, Lys226, and Glu229. Residue Glu229 participates in Mn(2+) binding.

This sequence belongs to the DXR family. Mg(2+) serves as cofactor. It depends on Mn(2+) as a cofactor.

It carries out the reaction 2-C-methyl-D-erythritol 4-phosphate + NADP(+) = 1-deoxy-D-xylulose 5-phosphate + NADPH + H(+). It participates in isoprenoid biosynthesis; isopentenyl diphosphate biosynthesis via DXP pathway; isopentenyl diphosphate from 1-deoxy-D-xylulose 5-phosphate: step 1/6. Functionally, catalyzes the NADPH-dependent rearrangement and reduction of 1-deoxy-D-xylulose-5-phosphate (DXP) to 2-C-methyl-D-erythritol 4-phosphate (MEP). The protein is 1-deoxy-D-xylulose 5-phosphate reductoisomerase of Stutzerimonas stutzeri (strain A1501) (Pseudomonas stutzeri).